We begin with the raw amino-acid sequence, 273 residues long: Phosphatidylglycerol--prolipoprotein diacylglyceryl transferase (273 aa).

7 helical membrane-spanning segments follow: residues 21–41 (VSVR…LWLA), 60–80 (LLFA…VIFY), 95–115 (VWTG…AMFW), 124–144 (FFGV…MGRM), 176–196 (SQLY…NWFI), 203–223 (GAVS…VEFV), and 237–257 (ISMG…MMVW). Arginine 143 is a binding site for a 1,2-diacyl-sn-glycero-3-phospho-(1'-sn-glycerol).

The protein belongs to the Lgt family.

Its subcellular location is the cell inner membrane. It carries out the reaction L-cysteinyl-[prolipoprotein] + a 1,2-diacyl-sn-glycero-3-phospho-(1'-sn-glycerol) = an S-1,2-diacyl-sn-glyceryl-L-cysteinyl-[prolipoprotein] + sn-glycerol 1-phosphate + H(+). It functions in the pathway protein modification; lipoprotein biosynthesis (diacylglyceryl transfer). Its function is as follows. Catalyzes the transfer of the diacylglyceryl group from phosphatidylglycerol to the sulfhydryl group of the N-terminal cysteine of a prolipoprotein, the first step in the formation of mature lipoproteins. This chain is Phosphatidylglycerol--prolipoprotein diacylglyceryl transferase, found in Vibrio campbellii (strain ATCC BAA-1116).